The primary structure comprises 292 residues: Aspartate carbamoyltransferase catalytic subunit (292 aa).

Carbamoyl phosphate is bound by residues R49 and T50. L-aspartate is bound at residue K77. Carbamoyl phosphate is bound by residues R99, H127, and Q130. Positions 161 and 211 each coordinate L-aspartate. Residues G250 and P251 each coordinate carbamoyl phosphate.

This sequence belongs to the aspartate/ornithine carbamoyltransferase superfamily. ATCase family. In terms of assembly, heterododecamer (2C3:3R2) of six catalytic PyrB chains organized as two trimers (C3), and six regulatory PyrI chains organized as three dimers (R2).

The catalysed reaction is carbamoyl phosphate + L-aspartate = N-carbamoyl-L-aspartate + phosphate + H(+). It participates in pyrimidine metabolism; UMP biosynthesis via de novo pathway; (S)-dihydroorotate from bicarbonate: step 2/3. Catalyzes the condensation of carbamoyl phosphate and aspartate to form carbamoyl aspartate and inorganic phosphate, the committed step in the de novo pyrimidine nucleotide biosynthesis pathway. The chain is Aspartate carbamoyltransferase catalytic subunit from Campylobacter lari (strain RM2100 / D67 / ATCC BAA-1060).